Consider the following 270-residue polypeptide: Abhydrolase domain-containing protein C22H12.03 (270 aa).

The region spanning 21-257 is the AB hydrolase-1 domain; it reads PPVLIFHGLL…CGHWVHFEKP (237 aa). Residues Ser-95, Glu-190, and His-250 each act as charge relay system in the active site.

Belongs to the AB hydrolase superfamily.

It is found in the mitochondrion. In Schizosaccharomyces pombe (strain 972 / ATCC 24843) (Fission yeast), this protein is Abhydrolase domain-containing protein C22H12.03.